A 643-amino-acid chain; its full sequence is Phosphatidylinositol-3,5-bisphosphate 3-phosphatase MTMR2 (643 aa).

Polar residues-rich tracts occupy residues 1 to 12 (MEKSSSCESLGS) and 23 to 40 (DSLS…VHTK). The disordered stretch occupies residues 1–56 (MEKSSSCESLGSQPAAARPPSVDSLSSASTSHSENSVHTKSASVVSSDSISTSADN). Phosphoserine is present on residues S6 and S9. The segment covering 41-55 (SASVVSSDSISTSAD) has biased composition (low complexity). Position 58 is a phosphoserine (S58). A GRAM domain is found at 68 to 139 (NKLAEMEEPP…GVINRVEKIG (72 aa)). Residues 205–580 (GWKLYDPLLE…RHLELWVGYY (376 aa)) enclose the Myotubularin phosphatase domain. A 1,2-diacyl-sn-glycero-3-phospho-(1D-myo-inositol-3,5-bisphosphate) is bound by residues N330, N355, and I356. A 1,2-diacyl-sn-glycero-3-phospho-(1D-myo-inositol-3-phosphate) is bound by residues N330, N355, and I356. C417 acts as the Phosphocysteine intermediate in catalysis. Positions 418, 419, 420, 421, 422, 423, 459, and 463 each coordinate a 1,2-diacyl-sn-glycero-3-phospho-(1D-myo-inositol-3,5-bisphosphate). The a 1,2-diacyl-sn-glycero-3-phospho-(1D-myo-inositol-3-phosphate) site is built by S418, D419, G420, W421, D422, and R423. Position 463 (R463) interacts with a 1,2-diacyl-sn-glycero-3-phospho-(1D-myo-inositol-3-phosphate). A coiled-coil region spans residues 593–627 (IHNRYKELLAKRAELQKKVEELQREISNRSTSSSE). The interval 615–643 (QREISNRSTSSSERASSPAQCVTPVQTVV) is disordered. The span at 620–631 (NRSTSSSERASS) shows a compositional bias: low complexity. Over residues 632–643 (PAQCVTPVQTVV) the composition is skewed to polar residues.

Belongs to the protein-tyrosine phosphatase family. Non-receptor class myotubularin subfamily. As to quaternary structure, homodimer (via coiled-coil domain). Heterotetramer consisting of one MTMR2 dimer and one SBF2/MTMR13 dimer; specifically in peripheral nerves stabilizes SBF2/MTMR13 at the membranes and increases MTMR2 catalytic activity towards phosphatidylinositol 3,5-bisphosphate and to a lesser extent towards phosphatidylinositol 3-phosphate. Heterodimer with SBF1/MTMR5; acts as an adapter for the phosphatase MTMR2 to regulate MTMR2 catalytic activity and subcellular location. Heterodimer with MTMR12. Post-translationally, phosphorylation at Ser-58 decreases MTMR2 localization to endocytic vesicular structures.

The protein resides in the cytoplasm. It localises to the early endosome membrane. Its subcellular location is the perinuclear region. The protein localises to the cell projection. It is found in the axon. The protein resides in the endosome membrane. It catalyses the reaction a 1,2-diacyl-sn-glycero-3-phospho-(1D-myo-inositol-3,5-bisphosphate) + H2O = a 1,2-diacyl-sn-glycero-3-phospho-(1D-myo-inositol-5-phosphate) + phosphate. The enzyme catalyses a 1,2-diacyl-sn-glycero-3-phospho-(1D-myo-inositol-3-phosphate) + H2O = a 1,2-diacyl-sn-glycero-3-phospho-(1D-myo-inositol) + phosphate. It carries out the reaction 1,2-dioctanoyl-sn-glycero-3-phospho-(1-D-myo-inositol-3-phosphate) + H2O = 1,2-dioctanoyl-sn-glycero-3-phospho-(1D-myo-inositol) + phosphate. The catalysed reaction is 1,2-dioctanoyl-sn-glycero-3-phospho-(1D-myo-inositol-3,5-bisphosphate) + H2O = 1,2-dioctanoyl-sn-glycero-3-phospho-(1D-myo-inositol-5-phosphate) + phosphate. In terms of biological role, lipid phosphatase that specifically dephosphorylates the D-3 position of phosphatidylinositol 3-phosphate and phosphatidylinositol 3,5-bisphosphate, generating phosphatidylinositol and phosphatidylinositol 5-phosphate. Regulates the level of these phosphoinositides critical for various biological processes including autophagy initiation and autophagosome maturation. This chain is Phosphatidylinositol-3,5-bisphosphate 3-phosphatase MTMR2, found in Pongo abelii (Sumatran orangutan).